The following is a 281-amino-acid chain: NADPH-dependent 7-cyano-7-deazaguanine reductase (281 aa).

Residue 88 to 90 (VES) participates in substrate binding. Position 90-91 (90-91 (SK)) interacts with NADPH. C189 (thioimide intermediate) is an active-site residue. The active-site Proton donor is the D196. Residue 228-229 (HE) participates in substrate binding. An NADPH-binding site is contributed by 257-258 (RG).

The protein belongs to the GTP cyclohydrolase I family. QueF type 2 subfamily. Homodimer.

The protein resides in the cytoplasm. The enzyme catalyses 7-aminomethyl-7-carbaguanine + 2 NADP(+) = 7-cyano-7-deazaguanine + 2 NADPH + 3 H(+). The protein operates within tRNA modification; tRNA-queuosine biosynthesis. Catalyzes the NADPH-dependent reduction of 7-cyano-7-deazaguanine (preQ0) to 7-aminomethyl-7-deazaguanine (preQ1). The polypeptide is NADPH-dependent 7-cyano-7-deazaguanine reductase (Klebsiella pneumoniae (strain 342)).